Here is a 246-residue protein sequence, read N- to C-terminus: Small ribosomal subunit protein uS2 (246 aa).

The protein belongs to the universal ribosomal protein uS2 family.

The chain is Small ribosomal subunit protein uS2 from Burkholderia thailandensis (strain ATCC 700388 / DSM 13276 / CCUG 48851 / CIP 106301 / E264).